The primary structure comprises 367 residues: MTNELKRTPLFEEYAKYGAKTVDFGGWELPVQFSSIKDEHDAVRNRAGLFDVSHMGEILVTGPDALNFLQNLLSNDVSKIATGQAQYTAMCYENGGVVDDLLTYKLADDHYLLCVNAANIEKDYDWMLENQHQYDVTIDNQSDAYAQIALQGPLAEEVLQSLTSTDVSAIKFFRFQENVEVTGHKVLVSRSGYTGEDGFELYGAPEDIKALWGKILDAGQDKGVVPAGLGCRDTLRFEAGLPLYGQELSATISPLEAGIGFAVKLNKEDFIGHDALVAQKENGLPRKLVGIEMIDKGIPRHGYKVFKDGKEIGEVTTGTQLPSSKRNVGHALIDSQFATIGNEMEIEIRGKQLKVVTVETPFYKRSK.

This sequence belongs to the GcvT family. As to quaternary structure, the glycine cleavage system is composed of four proteins: P, T, L and H.

It carries out the reaction N(6)-[(R)-S(8)-aminomethyldihydrolipoyl]-L-lysyl-[protein] + (6S)-5,6,7,8-tetrahydrofolate = N(6)-[(R)-dihydrolipoyl]-L-lysyl-[protein] + (6R)-5,10-methylene-5,6,7,8-tetrahydrofolate + NH4(+). Its function is as follows. The glycine cleavage system catalyzes the degradation of glycine. This is Aminomethyltransferase from Lysinibacillus sphaericus (strain C3-41).